We begin with the raw amino-acid sequence, 212 residues long: Telomere repeats-binding bouquet formation protein 2 (212 aa).

Belongs to the TERB2 family. In terms of assembly, component of the MAJIN-TERB1-TERB2 complex.

Functionally, meiosis-specific telomere-associated protein involved in meiotic telomere attachment to the nucleus inner membrane, a crucial step for homologous pairing and synapsis. Component of the MAJIN-TERB1-TERB2 complex, which promotes telomere cap exchange by mediating attachment of telomeric DNA to the inner nuclear membrane and replacement of the protective cap of telomeric chromosomes: in early meiosis, the MAJIN-TERB1-TERB2 complex associates with telomeric DNA and the shelterin/telosome complex. During prophase, the complex matures and promotes release of the shelterin/telosome complex from telomeric DNA. The polypeptide is Telomere repeats-binding bouquet formation protein 2 (Danio rerio (Zebrafish)).